Here is a 185-residue protein sequence, read N- to C-terminus: Peptide deformylase (185 aa).

Positions 109 and 152 each coordinate Fe cation. The active site involves Glu-153. Residue His-156 coordinates Fe cation.

The protein belongs to the polypeptide deformylase family. The cofactor is Fe(2+).

It carries out the reaction N-terminal N-formyl-L-methionyl-[peptide] + H2O = N-terminal L-methionyl-[peptide] + formate. In terms of biological role, removes the formyl group from the N-terminal Met of newly synthesized proteins. Requires at least a dipeptide for an efficient rate of reaction. N-terminal L-methionine is a prerequisite for activity but the enzyme has broad specificity at other positions. This is Peptide deformylase from Roseiflexus sp. (strain RS-1).